Reading from the N-terminus, the 367-residue chain is Cis-3-hydroxy-L-proline dehydratase (367 aa).

K165 functions as the Proton donor/acceptor in the catalytic mechanism. Mg(2+)-binding residues include D193, E218, and D241. K265 acts as the Proton donor/acceptor in catalysis.

It belongs to the mandelate racemase/muconate lactonizing enzyme family. It depends on Mg(2+) as a cofactor.

The enzyme catalyses cis-3-hydroxy-L-proline = 1-pyrroline-2-carboxylate + H2O. Its function is as follows. Catalyzes the dehydration of cis-3-hydroxy-L-proline (c3LHyp) to Delta(1)-pyrroline-2-carboxylate (Pyr2C). Is likely involved in a degradation pathway that converts c3LHyp to L-proline, which allows L.aggregata to grow on c3LHyp as a sole carbon source. Also catalyzes the epimerization of c3LHyp to trans-3-hydroxy-D-proline (t3DHyp), a competing reaction occurring from the same enolate anion intermediate. L-proline, t3LHyp, t4LHyp, c4DHyp and their methylated derivatives are not substrates. The polypeptide is Cis-3-hydroxy-L-proline dehydratase (Roseibium aggregatum (strain ATCC 25650 / DSM 13394 / JCM 20685 / NBRC 16684 / NCIMB 2208 / IAM 12614 / B1) (Stappia aggregata)).